Here is a 288-residue protein sequence, read N- to C-terminus: Short chain aldehyde dehydrogenase 1 (288 aa).

NAD(+)-binding positions include 26–28, aspartate 47, 72–73, and 99–101; these read SGI, DV, and NAG. Serine 153 serves as the catalytic Proton donor. Residues serine 153 and tyrosine 166 each contribute to the substrate site. The NAD(+) site is built by tyrosine 166, lysine 170, and threonine 201. Tyrosine 166 (proton acceptor) is an active-site residue. Catalysis depends on lysine 170, which acts as the Proton donor/acceptor.

The protein belongs to the short-chain dehydrogenases/reductases (SDR) family. In terms of assembly, homodimer. Expressed in mature seeds.

The catalysed reaction is 4,5,8-trihydroxycasbene + 2 NAD(+) = jolkinol C + 2 NADH + 2 H(+). It carries out the reaction a secondary alcohol + NAD(+) = a ketone + NADH + H(+). It catalyses the reaction a primary alcohol + NAD(+) = an aldehyde + NADH + H(+). It participates in secondary metabolite biosynthesis; terpenoid biosynthesis. Functionally, involved in the biosynthesis of macrocyclic lathyrane type diterpenoids (also called Euphorbia factors) natural products, including the cyclization route from casbene to jolkinol C, a precursor for ingenol mebutate that is used to treat actinic keratosis, a precancerous skin condition. Catalyzes the conversion of 4,5,8-trihydroxycasbene into jolkinol C in presence of NAD. Also mediates the formation of casbene dione derivative and 4-ketocasbene from 4-hydroxy-8-ketocasbene and 4-hydroxycasbene, respectively. Together with CYP71D445, triggers the biosynthesis of 8-ketocasbene from 8-hydroxycasbene. This Euphorbia lathyris (Caper spurge) protein is Short chain aldehyde dehydrogenase 1.